A 194-amino-acid polypeptide reads, in one-letter code: dATP triphosphohydrolase (194 aa).

Position 17 (Arg17) interacts with dATP. The Co(2+) site is built by His32, His71, Asp72, Glu75, Asp80, and Asp123.

The protein belongs to the Caudovirales dATP triphosphohydrolase family. Requires Co(2+) as cofactor.

It carries out the reaction dATP + H2O = 2'-deoxyadenosine + triphosphate + H(+). It catalyses the reaction dADP + H2O = 2'-deoxyadenosine + diphosphate. The catalysed reaction is dAMP + H2O = 2'-deoxyadenosine + phosphate. Catalyzes the hydrolysis of dATP, dADP and dAMP into dA. This step is essential for Z-genome synthesis (containing aminoadenine instead of adenine). Specifically removes dATP and its precursor dADP from the nucleotide pool of the host, preventing the incorporation of A into the phage genome and favoring the integration of the Z-base into the viral genome. The sequence is that of dATP triphosphohydrolase (datZ) from Salmonella phage PMBT28.